Here is a 230-residue protein sequence, read N- to C-terminus: Orotidine 5'-phosphate decarboxylase (230 aa).

Substrate contacts are provided by residues D9, K31, D58–T67, T120, R180, Q188, G208, and R209. K60 (proton donor) is an active-site residue.

The protein belongs to the OMP decarboxylase family. Type 1 subfamily. As to quaternary structure, homodimer.

The enzyme catalyses orotidine 5'-phosphate + H(+) = UMP + CO2. It functions in the pathway pyrimidine metabolism; UMP biosynthesis via de novo pathway; UMP from orotate: step 2/2. Catalyzes the decarboxylation of orotidine 5'-monophosphate (OMP) to uridine 5'-monophosphate (UMP). The sequence is that of Orotidine 5'-phosphate decarboxylase from Maridesulfovibrio salexigens (strain ATCC 14822 / DSM 2638 / NCIMB 8403 / VKM B-1763) (Desulfovibrio salexigens).